A 1196-amino-acid chain; its full sequence is MNAIQQKCRPKHQVLVLKCYPRTTKGAVDVKPNSSELSYLLYYAASRKSKFQKVGSFLEKKTASDVWRLRIGNVQVTLQILEALIEKNPKDLPLFAPSVLKILDLVLKSNDITMVESSTPTFEAFCANHDASSLFADQAYLKQYESIVRQYASLASTRRSPGKTTPSKPVAMRWRNTGLEAIRSVASSDALASVQGTQYDILVPMILENLWTDNEEFLEILLHRAHLEEKVDTDKLLLRRRTSVATVRTAEGGNEPNPIALSGSAMDVDKLAEEDIGVLAITCLKQIFVGPNRSQIHAATVALLKFIEERVNQDENVVKKSARTGRDSGWAIKIFGLISRWAPVQERYVILMTTMDTLVRMPLSDESMRHHIVWMAMMGALLRSDVNLIGLSVMDVLLALMQHMKRLVQLPGDPSGASASDMLLPGQPDPRSPTTIAASTAAQATAAARKELLERIQQTIGDLATHVYYADQISDMISAIIQRLRPSKSNSPGNTSPQGEKIDGQVASPEDSTVESLFSLTVAKVAALKAIKTILLVANPRTKMAGNLGLARNKVSISVWEGTQWLLRDPEGLVRKAYADAVITWLDRETVKGDLKAVDESAPNPRASIRYTRDLGKMDVSPARRAASSASTRREPKPTRLHFLNLIHVAIYDNALQYVDYETDINLLHVLLAKLVDRLGINAVRYGLPMIFRLQEDIQEVDAPIGKVRVGCLVHGYLWALTEKFDFENTLVGRAIHNEIIRRRSKHFWIEGVHVPPPLLELIGTPGMVKPQPKMPLNQIESEALLPFDDRFALIDSICTGYQESFASPPTSPAASPGRSFTSPILGSQMSGLSPHTATDDEREVPSRFRDQMYVEWTRDLVIAMVQAGSKSASLNGSKTGTTGTSRYANARLGGNTGSPMASQQNLRPYSQPAGKDTLAPQNNPLAKLRKSSLRSNATPSPASSGPIRSGVTSVDQLKMVLSGQVAPAVVRAQTSHGNGAGGLGADDSTDSLVSYDMTVSEMSFNAGSVTYTPSHPVPRPPSRSRSHSRERRAASRSGAESPGGFDQLSRSNSFGKSNGNGRTIEDGRHDRHDDDGVPPVPPLPSGVSSPPLPPSRDGKSPSPRSPSTQAPVLPPVSLESSAIRPAKTRSLKSRGRHSRSGSIPSAPAPHAMRPATSAGHGVVGGDSAFDLDALLLGIDTKDMQGTLGNVTRPVY.

4 disordered regions span residues 486-508 (PSKSNSPGNTSPQGEKIDGQVAS), 806-847 (FASP…EVPS), 872-951 (SASL…IRSG), and 1008-1160 (GSVT…TSAG). Over residues 487–498 (SKSNSPGNTSPQ) the composition is skewed to polar residues. Residues 806–817 (FASPPTSPAASP) are compositionally biased toward low complexity. A compositionally biased stretch (polar residues) spans 819–837 (RSFTSPILGSQMSGLSPHT). The segment covering 838 to 847 (ATDDEREVPS) has biased composition (basic and acidic residues). Polar residues-rich tracts occupy residues 872–888 (SASLNGSKTGTTGTSRY), 898–909 (GSPMASQQNLRP), and 934–944 (LRSNATPSPAS). A compositionally biased stretch (low complexity) spans 1036 to 1045 (SRSGAESPGG). Residues 1049-1062 (LSRSNSFGKSNGNG) are compositionally biased toward polar residues. Over residues 1064-1076 (TIEDGRHDRHDDD) the composition is skewed to basic and acidic residues. The span at 1079–1095 (PPVPPLPSGVSSPPLPP) shows a compositional bias: pro residues. Residues 1127–1140 (AKTRSLKSRGRHSR) are compositionally biased toward basic residues.

It belongs to the EFR3 family.

The protein is Protein EFR3 (EFR3) of Pyricularia oryzae (strain 70-15 / ATCC MYA-4617 / FGSC 8958) (Rice blast fungus).